We begin with the raw amino-acid sequence, 408 residues long: Histidine--tRNA ligase (408 aa).

It belongs to the class-II aminoacyl-tRNA synthetase family. In terms of assembly, homodimer.

The protein localises to the cytoplasm. The enzyme catalyses tRNA(His) + L-histidine + ATP = L-histidyl-tRNA(His) + AMP + diphosphate + H(+). In Campylobacter lari (strain RM2100 / D67 / ATCC BAA-1060), this protein is Histidine--tRNA ligase.